The primary structure comprises 121 residues: Large ribosomal subunit protein bL12 (121 aa).

Belongs to the bacterial ribosomal protein bL12 family. In terms of assembly, homodimer. Part of the ribosomal stalk of the 50S ribosomal subunit. Forms a multimeric L10(L12)X complex, where L10 forms an elongated spine to which 2 to 4 L12 dimers bind in a sequential fashion. Binds GTP-bound translation factors.

Functionally, forms part of the ribosomal stalk which helps the ribosome interact with GTP-bound translation factors. Is thus essential for accurate translation. In Escherichia coli O81 (strain ED1a), this protein is Large ribosomal subunit protein bL12.